We begin with the raw amino-acid sequence, 76 residues long: UPF0291 protein BCE_1981 (76 aa).

This sequence belongs to the UPF0291 family.

Its subcellular location is the cytoplasm. This is UPF0291 protein BCE_1981 from Bacillus cereus (strain ATCC 10987 / NRS 248).